Here is an 840-residue protein sequence, read N- to C-terminus: Sorting nexin-25 (840 aa).

The PXA domain occupies 1-164; the sequence is MDKALKEVFD…MLLAQLAYRE (164 aa). One can recognise an RGS domain in the interval 287-401; that stretch reads QFEDILANTF…IVSDLYEKLL (115 aa). Residues 434–499 adopt a coiled-coil conformation; sequence TNQINEQASF…RTDLQLHMAR (66 aa). Positions 508–628 constitute a PX domain; sequence GMWKASITSG…AFLSPSPDYL (121 aa). S665 bears the Phosphoserine mark.

This sequence belongs to the sorting nexin family.

It localises to the endosome membrane. Its function is as follows. May be involved in several stages of intracellular trafficking. This Homo sapiens (Human) protein is Sorting nexin-25 (SNX25).